We begin with the raw amino-acid sequence, 155 residues long: Anaerobic ribonucleoside-triphosphate reductase-activating protein (155 aa).

[4Fe-4S] cluster is bound by residues cysteine 26, cysteine 30, and cysteine 33. Residues 32–34 (GCY) and glycine 74 contribute to the S-adenosyl-L-methionine site.

The protein belongs to the organic radical-activating enzymes family. As to quaternary structure, forms a tetramer composed of two NrdD and two NrdG subunits. Requires [4Fe-4S] cluster as cofactor.

Its subcellular location is the cytoplasm. It catalyses the reaction glycyl-[protein] + reduced [flavodoxin] + S-adenosyl-L-methionine = glycin-2-yl radical-[protein] + semiquinone [flavodoxin] + 5'-deoxyadenosine + L-methionine + H(+). Functionally, activation of anaerobic ribonucleoside-triphosphate reductase under anaerobic conditions by generation of an organic free radical, using S-adenosylmethionine and reduced flavodoxin as cosubstrates to produce 5'-deoxy-adenosine. The polypeptide is Anaerobic ribonucleoside-triphosphate reductase-activating protein (nrdG) (Haemophilus influenzae (strain ATCC 51907 / DSM 11121 / KW20 / Rd)).